A 285-amino-acid polypeptide reads, in one-letter code: MASLREIRKRLQSIQNIQQLTKAMEMVAASRLHQVQIKVKQAKPYVVKLSEILDRLSQITQDIKHPLLEQREVKKVGVVIVAADMGLSGPYNKDIFSAANKFLKTYAQEQVELILVGKKATDYYKKRPWNIRFEFGEWGEKLTSHQIKTFANQLMSWFLIGELDEIWLVYTHYVTMMTRKVMVEKFLNIQQISPKSEKSPVDYIFEPNPKQIYGAILFNYCMTKFQSILNESYASELAARIFAMKAATSNADDMIEKLTLVRNKVRQAGITKEMLEITSGAEGLK.

The protein belongs to the ATPase gamma chain family. In terms of assembly, F-type ATPases have 2 components, CF(1) - the catalytic core - and CF(0) - the membrane proton channel. CF(1) has five subunits: alpha(3), beta(3), gamma(1), delta(1), epsilon(1). CF(0) has three main subunits: a, b and c.

It localises to the cell inner membrane. Its function is as follows. Produces ATP from ADP in the presence of a proton gradient across the membrane. The gamma chain is believed to be important in regulating ATPase activity and the flow of protons through the CF(0) complex. The polypeptide is ATP synthase gamma chain (Protochlamydia amoebophila (strain UWE25)).